The primary structure comprises 142 residues: Salivary protein 15b (142 aa).

An N-terminal signal peptide occupies residues Met1 to Ala20. Disulfide bonds link Cys27-Cys44, Cys40-Cys108, and Cys91-Cys117.

The protein belongs to the PBP/GOBP family. In terms of tissue distribution, female salivary gland.

It is found in the secreted. Its function is as follows. Inhibits contact coagulation pathway activation in the host by sequestering anionic polymers, such as dextran sulfate and heparin, and thus blocking interaction of protein components of the pathway with negatively charged surfaces. Inhibits dextran sulfate-mediated autoactivation of host coagulation factor XII (F12). Inhibits dextran sulfate-mediated activation of host factor XI (F11) by activated F12. Inhibits polyphosphate-induced plasma extravasation at the injection site in mouse model, probably via inhibition of bradykinin generation in host skin. This Phlebotomus duboscqi (Sandfly) protein is Salivary protein 15b.